Here is an 82-residue protein sequence, read N- to C-terminus: MTRILLLLLRFYQYFISPLLGNNCRFHLTCSEYAKEAISMHGSIKGLWFTFKRIIKCQPFCDGGYDTVPISIKNSKPLNKKI.

Belongs to the UPF0161 family.

The protein resides in the cell inner membrane. Could be involved in insertion of integral membrane proteins into the membrane. The sequence is that of Putative membrane protein insertion efficiency factor from Rickettsia peacockii (strain Rustic).